Here is a 241-residue protein sequence, read N- to C-terminus: VKSTNLMAFVATKMLERQEDLDTCTEMQVEKMKASTKARLRTESSFAPRTWEDAIKDGELLFNGTILQAESPTMTLASVEMKGKKSPIDFAPSNIAPIGQNPIYLSPCIPNFDGNVWEATMYHHRGATLTKTMNCNCFQRTIWCHPNPSRMRLSYAFVLYCRNTKKICGYLIARQVAGIETGIRKCFRCIKSGFVMATDEISLTILRSIKSGAQLDPYWGNETPDIDKTEAYMLSLREAGP.

It localises to the host cytoplasm. It is found in the host nucleus. In terms of biological role, suppresses the RNA silencing-based antiviral response in Drosophila cells. This Homo sapiens (Human) protein is Non-structural protein 1 (NS).